Consider the following 374-residue polypeptide: Ribonuclease D (374 aa).

One can recognise a 3'-5' exonuclease domain in the interval 6–171 (IISTTEDLKK…RATRVILLSK (166 aa)). The 80-residue stretch at 213 to 292 (DRKSIGVAQE…ARALNKKEVD (80 aa)) folds into the HRDC domain.

It belongs to the RNase D family. A divalent metal cation is required as a cofactor.

It is found in the cytoplasm. It carries out the reaction Exonucleolytic cleavage that removes extra residues from the 3'-terminus of tRNA to produce 5'-mononucleotides.. Functionally, exonuclease involved in the 3' processing of various precursor tRNAs. Initiates hydrolysis at the 3'-terminus of an RNA molecule and releases 5'-mononucleotides. This chain is Ribonuclease D, found in Desulfotalea psychrophila (strain LSv54 / DSM 12343).